Consider the following 455-residue polypeptide: Beta-1,4-mannosyltransferase bre-3 (455 aa).

Belongs to the glycosyltransferase 2 family. Endothelial cells.

It localises to the cytoplasm. It functions in the pathway protein modification; protein glycosylation. In terms of biological role, glycosyltransferase with a proposed role in glycosphingolipid biosynthesis. Involved in susceptibility to pore-forming crystal toxins in conjunction with bre-1, bre-2, bre-4 and bre-5. Involved in resistance to the nematotoxic C.cinerea galectin Cgl2. Has a role in determining brood size. The polypeptide is Beta-1,4-mannosyltransferase bre-3 (bre-3) (Caenorhabditis elegans).